A 571-amino-acid polypeptide reads, in one-letter code: MTLSPEDIKIIEKYALQNAVKYGKAPQPKAVMGKVMGECPQLRADPSGVSAALENIVSEIAKGNPEAWEARLSEIAPELIEALSVKKEPDKGLKPLEGAETGKVVMRFAPNPNGPATLGSSRGMVVNSEYVKVYKGKFILRFDDTDPDIKRPMLEAYDWYMDDFKWLGVVPDQVVRASDRFPIYYDYARKLIEMGKAYVCFCKGEDFKRLKDSKKACPHRDTDPEENLMHWEKMLAGEYEDQQAVLRIKTDIEHKDPALRDWGAFRIRKMSHPRPEIGNKYIVWPLLDFAGAIEDHELGMTHIIRGKDLIDSEKRQTYIYKYFGWTYPKTTHWGRVKIHEFGKFSTSTLRKAIESGEYSGWDDPRLPTIRAIRRRGIRAEALKKFMIEMGVGMTDVSISMESLYAENRKIVDPVANRYFFVWNPVELEIEGMKPVVAKVPRHPTDHARGMREISIENKVLVCAEDIEKLNVGSVLRLKDLCNVEITSLSPLRVKRSETSLEDLKKAKGKIIHWVPVDGIPVKVCGPEGDIEGTGERGIETELDNIVQFERFGFCRIDAVDGENVVAYFAHK.

Residues Pro110–Ser120 carry the 'HIGH' region motif.

Belongs to the class-I aminoacyl-tRNA synthetase family. Glutamate--tRNA ligase type 2 subfamily.

It is found in the cytoplasm. It catalyses the reaction tRNA(Glu) + L-glutamate + ATP = L-glutamyl-tRNA(Glu) + AMP + diphosphate. Catalyzes the attachment of glutamate to tRNA(Glu) in a two-step reaction: glutamate is first activated by ATP to form Glu-AMP and then transferred to the acceptor end of tRNA(Glu). This is Glutamate--tRNA ligase from Methanosarcina mazei (strain ATCC BAA-159 / DSM 3647 / Goe1 / Go1 / JCM 11833 / OCM 88) (Methanosarcina frisia).